The primary structure comprises 218 residues: Translation initiation factor 6 (218 aa).

This sequence belongs to the eIF-6 family.

Functionally, binds to the 50S ribosomal subunit and prevents its association with the 30S ribosomal subunit to form the 70S initiation complex. This Methanosarcina acetivorans (strain ATCC 35395 / DSM 2834 / JCM 12185 / C2A) protein is Translation initiation factor 6.